The sequence spans 126 residues: Holo-[acyl-carrier-protein] synthase (126 aa).

The Mg(2+) site is built by D8 and E57.

The protein belongs to the P-Pant transferase superfamily. AcpS family. It depends on Mg(2+) as a cofactor.

It localises to the cytoplasm. It carries out the reaction apo-[ACP] + CoA = holo-[ACP] + adenosine 3',5'-bisphosphate + H(+). Functionally, transfers the 4'-phosphopantetheine moiety from coenzyme A to a Ser of acyl-carrier-protein. The sequence is that of Holo-[acyl-carrier-protein] synthase from Leptospira interrogans serogroup Icterohaemorrhagiae serovar copenhageni (strain Fiocruz L1-130).